Consider the following 702-residue polypeptide: MNSLFASTARGLEELLKTELENLGAVECQVVQGGVHFKGDTRLVYQSLMWSRLASRIMLPLGECKVYSDLDLYLGVQAINWTEMFNPGATFAVHFSGLNDTIRNSQYGAMKVKDAIVDAFTRKNLPRPNVDRDAPDIRVNVWLHKETASIALDLSGDGLHLRGYRDRAGIAPIKETLAAAIVMRSGWQPGTPLLDPMCGSGTLLIEAAMLATDRAPGLHRGRWGFSGWAQHDEAIWQEVKAEAQTRARKGLAEYSSHFYGSDSDARVIQRARTNARLAGIGELITFEVKDVAQLANPLPKGPYGTVLSNPPYGERLDSEPALIALHSLLGRIMKNQFGGWNLSLFSASPDLLSCLQLRADKQYKAKNGPLDCVQKNYHVAESTPDSKPAMAAEDYANRLRKNLKKFEKWARQEGIECYRLYDADLPEYNVAVDRYADWVVVQEYAPPKTIDAHKARQRLFDIIAATISVLGIAPNKLVLKTRERQKGKNQYQKLGEKGEFLEVTEYNAHLWVNLTDYLDTGLFLDHRIARRMLGQMSKGKDFLNLFSYTGSATVHAGLGGARSTTTVDMSRTYLEWAERNLRLNGLTGRAHRLIQADCLAWLREANEQFDLIFIDPPTFSNSKRMEDAFDVQRDHLVLMKDLKRLLRAGGTIMFSNNKRGFRMDLDGLAKLGLKAQEITQKTLSQDFARNRQIHNCWLITAA.

A THUMP domain is found at 43–154; that stretch reads LVYQSLMWSR…KETASIALDL (112 aa).

This sequence belongs to the methyltransferase superfamily. RlmKL family.

It localises to the cytoplasm. It catalyses the reaction guanosine(2445) in 23S rRNA + S-adenosyl-L-methionine = N(2)-methylguanosine(2445) in 23S rRNA + S-adenosyl-L-homocysteine + H(+). It carries out the reaction guanosine(2069) in 23S rRNA + S-adenosyl-L-methionine = N(2)-methylguanosine(2069) in 23S rRNA + S-adenosyl-L-homocysteine + H(+). Functionally, specifically methylates the guanine in position 2445 (m2G2445) and the guanine in position 2069 (m7G2069) of 23S rRNA. This chain is Ribosomal RNA large subunit methyltransferase K/L, found in Escherichia coli (strain SMS-3-5 / SECEC).